A 344-amino-acid chain; its full sequence is uncharacterized protein (344 aa).

This is an uncharacterized protein from Caenorhabditis elegans.